Consider the following 694-residue polypeptide: Elongation factor G (694 aa).

Residues 9 to 288 (SKIRNIGIMA…VIVKWLPSPK (280 aa)) form the tr-type G domain. GTP contacts are provided by residues 18-25 (AHIDAGKT), 82-86 (DTPGH), and 136-139 (NKMD).

This sequence belongs to the TRAFAC class translation factor GTPase superfamily. Classic translation factor GTPase family. EF-G/EF-2 subfamily.

The protein localises to the cytoplasm. In terms of biological role, catalyzes the GTP-dependent ribosomal translocation step during translation elongation. During this step, the ribosome changes from the pre-translocational (PRE) to the post-translocational (POST) state as the newly formed A-site-bound peptidyl-tRNA and P-site-bound deacylated tRNA move to the P and E sites, respectively. Catalyzes the coordinated movement of the two tRNA molecules, the mRNA and conformational changes in the ribosome. The sequence is that of Elongation factor G from Chlamydia felis (strain Fe/C-56) (Chlamydophila felis).